A 700-amino-acid chain; its full sequence is Pentatricopeptide repeat-containing protein At3g26540 (700 aa).

17 PPR repeats span residues 95 to 125 (PIFL…MPER), 126 to 160 (DGGS…GVRA), 161 to 195 (TETS…GYSG), 196 to 226 (NVDL…IVNP), 227 to 261 (SDVS…NVRP), 262 to 296 (LNHT…SVVA), 297 to 327 (DTVV…TRSK), 328 to 362 (DLKS…NIVS), 363 to 389 (WNAM…MRQE), 394 to 428 (DNVT…GYDT), 429 to 459 (NVIV…MSEL), 461 to 495 (DEVS…AKPS), 497 to 529 (YTLA…GYKI), 530 to 560 (DVVI…AATR), 561 to 595 (DLIL…GVKP), 596 to 626 (DHVT…MSTK), and 632 to 662 (QVEH…MPFD).

The protein belongs to the PPR family. PCMP-A subfamily.

This chain is Pentatricopeptide repeat-containing protein At3g26540 (PCMP-A5), found in Arabidopsis thaliana (Mouse-ear cress).